Consider the following 795-residue polypeptide: Plakophilin-2 (795 aa).

The interval 1–318 (MAVPGSLAEC…MTLERAVNML (318 aa)) is required for binding to single-stranded DNA. At Ser44 the chain carries Phosphoserine. Omega-N-methylarginine is present on Arg46. A phosphoserine mark is found at Ser82, Ser132, Ser135, Ser151, Ser154, Ser155, Ser172, Ser188, and Ser232. Disordered stretches follow at residues 197-233 (GTAR…SHSA) and 245-274 (SQAR…REPG). Polar residues predominate over residues 245-257 (SQARLQSTQSRTA). The span at 258-268 (RSSWPRSSVRS) shows a compositional bias: low complexity. Residues Ser265 and Ser287 each carry the phosphoserine modification. ARM repeat units lie at residues 299–339 (DAQL…QHES), 343–382 (SEAR…NLVF), 385–425 (NDNK…NLSS), 484–530 (PDGR…NLSY), 585–625 (PHGI…NLTA), 633–672 (LVAR…NLSR), 677–718 (QNEI…NLMQ), and 721–763 (YQNA…SLWA).

It belongs to the beta-catenin family. In terms of assembly, interacts with DSC2. Interacts with JUP. Interacts with KRT5/CK5, KRT8/CK8, KRT14/CK14, KRT18/CK18 and VIM. Interacts (via N-terminus) with MARK3/C-TAK1. Interacts with DSP. Interacts with DSG1, DSG2 and DSG3. Interacts (via N-terminus) with CTNNB1. Interacts with CDH1. Interacts with the RNA polymerase III (Pol III) complex proteins POLR3A/RPC155, POLR3F/RPC39 and POLR3C/RPC82. Interacts with CTNNA3. Interacts (via N-terminus) with SCN5A/Nav1.5. Interacts with ANK3/ANKG and GJA1/CX43. As to expression, expressed in cardiomyocytes in the heart (at protein level).

It is found in the nucleus. The protein localises to the cell junction. It localises to the desmosome. The protein resides in the cytoplasm. Its function is as follows. A component of desmosome cell-cell junctions which are required for positive regulation of cellular adhesion. Regulates focal adhesion turnover resulting in changes in focal adhesion size, cell adhesion and cell spreading, potentially via transcriptional modulation of beta-integrins. Required to maintain gingival epithelial barrier function. Important component of the desmosome that is also required for localization of desmosome component proteins such as DSC2, DSG2 and JUP to the desmosome cell-cell junction. Required for the formation of desmosome cell junctions in cardiomyocytes, thereby required for the correct formation of the heart, specifically trabeculation and formation of the atria walls. Loss of desmosome cell junctions leads to mis-localization of DSP and DSG2 resulting in disruption of cell-cell adhesion and disordered intermediate filaments. Modulates profibrotic gene expression in cardiomyocytes via regulation of DSP expression and subsequent activation of downstream TGFB1 and MAPK14/p38 MAPK signaling. Required for cardiac sodium current propagation and electrical synchrony in cardiac myocytes, via ANK3 stabilization and modulation of SCN5A/Nav1.5 localization to cell-cell junctions. Required for mitochondrial function, nuclear envelope integrity and positive regulation of SIRT3 transcription via maintaining DES localization at its nuclear envelope and cell tip anchoring points, and thereby preserving regulation of the transcriptional program. Maintenance of nuclear envelope integrity protects against DNA damage and transcriptional dysregulation of genes, especially those involved in the electron transport chain, thereby preserving mitochondrial function and protecting against superoxide radical anion generation. Binds single-stranded DNA (ssDNA). May regulate the localization of GJA1 to gap junctions in intercalated disks of the heart. The protein is Plakophilin-2 of Mus musculus (Mouse).